Reading from the N-terminus, the 882-residue chain is Chondroitin sulfate synthase 3 (882 aa).

Residues 1 to 7 lie on the Cytoplasmic side of the membrane; sequence MAVRSRR. The chain crosses the membrane as a helical; Signal-anchor for type II membrane protein span at residues 8–28; the sequence is PWMSVALGLVLGFTAASWLIA. Residues 29–882 are Lumenal-facing; the sequence is PRVAELSERK…LGVRYNRTLS (854 aa). The tract at residues 46–167 is disordered; it reads SYYGRSAAGP…GDGGAAAPSA (122 aa). 2 stretches are compositionally biased toward low complexity: residues 59 to 69 and 120 to 131; these read AQQPLPQPQSR and GATGLPGAPAAE. Residues Asn-155, Asn-279, and Asn-710 are each glycosylated (N-linked (GlcNAc...) asparagine). A divalent metal cation is bound by residues Asp-720 and His-834. The N-linked (GlcNAc...) asparagine glycan is linked to Asn-878.

The protein belongs to the chondroitin N-acetylgalactosaminyltransferase family. The cofactor is Co(2+). It depends on Mn(2+) as a cofactor. Cd(2+) is required as a cofactor. As to expression, detected at low levels in brain, cerebral cortex, uterus and small intestine.

It localises to the golgi apparatus. Its subcellular location is the golgi stack membrane. It carries out the reaction 3-O-(beta-D-GlcA-(1-&gt;3)-beta-D-GalNAc-(1-&gt;4)-beta-D-GlcA-(1-&gt;3)-beta-D-Gal-(1-&gt;3)-beta-D-Gal-(1-&gt;4)-beta-D-Xyl)-L-seryl-[protein] + UDP-N-acetyl-alpha-D-galactosamine = 3-O-(beta-D-GalNAc-(1-&gt;4)-beta-D-GlcA-(1-&gt;3)-beta-D-GalNAc-(1-&gt;4)-beta-D-GlcA-(1-&gt;3)-beta-D-Gal-(1-&gt;3)-beta-D-Gal-(1-&gt;4)-beta-D-Xyl)-L-seryl-[protein] + UDP + H(+). The enzyme catalyses 3-O-{beta-D-GlcA-(1-&gt;3)-[beta-D-GalNAc-(1-&gt;4)-beta-D-GlcA-(1-&gt;3)](n)-beta-D-GalNAc-(1-&gt;4)-beta-D-GlcA-(1-&gt;3)-beta-D-Gal-(1-&gt;3)-beta-D-Gal-(1-&gt;4)-beta-D-Xyl}-L-seryl-[protein] + UDP-N-acetyl-alpha-D-galactosamine = 3-O-{[beta-D-GalNAc-(1-&gt;4)-beta-D-GlcA-(1-&gt;3)](n+1)-beta-D-GalNAc-(1-&gt;4)-beta-D-GlcA-(1-&gt;3)-beta-D-Gal-(1-&gt;3)-beta-D-Gal-(1-&gt;4)-beta-D-Xyl}-L-seryl-[protein] + UDP + H(+). The catalysed reaction is 3-O-(beta-D-GalNAc-(1-&gt;4)-beta-D-GlcA-(1-&gt;3)-beta-D-Gal-(1-&gt;3)-beta-D-Gal-(1-&gt;4)-beta-D-Xyl)-L-seryl-[protein] + UDP-alpha-D-glucuronate = 3-O-(beta-D-GlcA-(1-&gt;3)-beta-D-GalNAc-(1-&gt;4)-beta-D-GlcA-(1-&gt;3)-beta-D-Gal-(1-&gt;3)-beta-D-Gal-(1-&gt;4)-beta-D-Xyl)-L-seryl-[protein] + UDP + H(+). It catalyses the reaction 3-O-{[beta-D-GalNAc-(1-&gt;4)-beta-D-GlcA-(1-&gt;3)](n)-beta-D-GalNAc-(1-&gt;4)-beta-D-GlcA-(1-&gt;3)-beta-D-Gal-(1-&gt;3)-beta-D-Gal-(1-&gt;4)-beta-D-Xyl}-L-seryl-[protein] + UDP-alpha-D-glucuronate = 3-O-{beta-D-GlcA-(1-&gt;3)-[beta-D-GalNAc-(1-&gt;4)-beta-D-GlcA-(1-&gt;3)](n)-beta-D-GalNAc-(1-&gt;4)-beta-D-GlcA-(1-&gt;3)-beta-D-Gal-(1-&gt;3)-beta-D-Gal-(1-&gt;4)-beta-D-Xyl}-L-seryl-[protein] + UDP + H(+). Has both beta-1,3-glucuronic acid and beta-1,4-N-acetylgalactosamine transferase activity. Transfers glucuronic acid (GlcUA) from UDP-GlcUA and N-acetylgalactosamine (GalNAc) from UDP-GalNAc to the non-reducing end of the elongating chondroitin polymer. Specific activity is much reduced compared to CHSY1. In Homo sapiens (Human), this protein is Chondroitin sulfate synthase 3 (CHSY3).